The sequence spans 397 residues: Succinyl-diaminopimelate desuccinylase (397 aa).

Histidine 74 provides a ligand contact to Zn(2+). Aspartate 76 is a catalytic residue. Aspartate 107 provides a ligand contact to Zn(2+). Residue glutamate 141 is the Proton acceptor of the active site. Residues glutamate 142, glutamate 170, and histidine 368 each coordinate Zn(2+).

It belongs to the peptidase M20A family. DapE subfamily. As to quaternary structure, homodimer. Zn(2+) is required as a cofactor. Co(2+) serves as cofactor.

The enzyme catalyses N-succinyl-(2S,6S)-2,6-diaminopimelate + H2O = (2S,6S)-2,6-diaminopimelate + succinate. Its pathway is amino-acid biosynthesis; L-lysine biosynthesis via DAP pathway; LL-2,6-diaminopimelate from (S)-tetrahydrodipicolinate (succinylase route): step 3/3. Its function is as follows. Catalyzes the hydrolysis of N-succinyl-L,L-diaminopimelic acid (SDAP), forming succinate and LL-2,6-diaminopimelate (DAP), an intermediate involved in the bacterial biosynthesis of lysine and meso-diaminopimelic acid, an essential component of bacterial cell walls. The polypeptide is Succinyl-diaminopimelate desuccinylase (Mesorhizobium japonicum (strain LMG 29417 / CECT 9101 / MAFF 303099) (Mesorhizobium loti (strain MAFF 303099))).